A 163-amino-acid polypeptide reads, in one-letter code: MNDMVCAGRVTSTHGVRGCVRFRSYMSVDFKFPGIDVSIGGVSYTVCGAFSRGFPMFVLTLSRVGSACEAEKLVGFDVFLSESLLPPLQVGEYYCKDLVGLAVYDLEECVGHVSMLYDFGAAAEVLEIVLLSGKKVMIPFTSAFVADIDLNKKRLAVVFPPEI.

The region spanning 90 to 155 (VGEYYCKDLV…ADIDLNKKRL (66 aa)) is the PRC barrel domain.

This sequence belongs to the RimM family. Binds ribosomal protein uS19.

Its subcellular location is the cytoplasm. An accessory protein needed during the final step in the assembly of 30S ribosomal subunit, possibly for assembly of the head region. Essential for efficient processing of 16S rRNA. May be needed both before and after RbfA during the maturation of 16S rRNA. It has affinity for free ribosomal 30S subunits but not for 70S ribosomes. The protein is Ribosome maturation factor RimM of Neorickettsia sennetsu (strain ATCC VR-367 / Miyayama) (Ehrlichia sennetsu).